We begin with the raw amino-acid sequence, 229 residues long: UPF0758 protein GSU0386 (229 aa).

An MPN domain is found at 107–229; that stretch reads RFTSPEQVYN…FTSFVSAGLL (123 aa). H178, H180, and D191 together coordinate Zn(2+). Residues 178 to 191 carry the JAMM motif motif; sequence HNHPTGDPAPSRED.

It belongs to the UPF0758 family.

The sequence is that of UPF0758 protein GSU0386 from Geobacter sulfurreducens (strain ATCC 51573 / DSM 12127 / PCA).